The sequence spans 517 residues: Cytochrome P450 52A8 (517 aa).

Position 464 (C464) interacts with heme.

This sequence belongs to the cytochrome P450 family. Requires heme as cofactor.

In terms of biological role, together with an NADPH cytochrome P450 the enzyme system catalyzes the terminal hydroxylation as the first step in the assimilation of alkanes and fatty acids. Preferentially hydroxylates lauric acid. The chain is Cytochrome P450 52A8 (CYP52A8) from Candida tropicalis (Yeast).